A 469-amino-acid polypeptide reads, in one-letter code: 3-isopropylmalate dehydratase large subunit (469 aa).

[4Fe-4S] cluster contacts are provided by Cys-347, Cys-408, and Cys-411.

This sequence belongs to the aconitase/IPM isomerase family. LeuC type 1 subfamily. In terms of assembly, heterodimer of LeuC and LeuD. [4Fe-4S] cluster is required as a cofactor.

The enzyme catalyses (2R,3S)-3-isopropylmalate = (2S)-2-isopropylmalate. The protein operates within amino-acid biosynthesis; L-leucine biosynthesis; L-leucine from 3-methyl-2-oxobutanoate: step 2/4. Its function is as follows. Catalyzes the isomerization between 2-isopropylmalate and 3-isopropylmalate, via the formation of 2-isopropylmaleate. The polypeptide is 3-isopropylmalate dehydratase large subunit (Actinobacillus pleuropneumoniae serotype 5b (strain L20)).